The following is a 142-amino-acid chain: ATP synthase F(0) complex subunit C3, mitochondrial (142 aa).

The transit peptide at methionine 1–arginine 67 directs the protein to the mitochondrion. Residues valine 83 to tyrosine 103 form a helical membrane-spanning segment. N6,N6,N6-trimethyllysine is present on lysine 110. Residues isoleucine 118–isoleucine 138 traverse the membrane as a helical segment.

This sequence belongs to the ATPase C chain family. In terms of assembly, F-type ATPases have 2 components, CF(1) - the catalytic core - and CF(0) - the membrane proton channel. CF(1) has five subunits: alpha(3), beta(3), gamma(1), delta(1), epsilon(1). CF(0) has three main subunits: a, b and c. Interacts with TMEM70 and TMEM242. Post-translationally, trimethylated by ATPSCKMT at Lys-110. Methylation is required for proper incorporation of the C subunit into the ATP synthase complex and mitochondrial respiration.

Its subcellular location is the mitochondrion membrane. Functionally, mitochondrial membrane ATP synthase (F(1)F(0) ATP synthase or Complex V) produces ATP from ADP in the presence of a proton gradient across the membrane which is generated by electron transport complexes of the respiratory chain. F-type ATPases consist of two structural domains, F(1) - containing the extramembraneous catalytic core and F(0) - containing the membrane proton channel, linked together by a central stalk and a peripheral stalk. During catalysis, ATP synthesis in the catalytic domain of F(1) is coupled via a rotary mechanism of the central stalk subunits to proton translocation. Part of the complex F(0) domain. A homomeric c-ring of probably 10 subunits is part of the complex rotary element. This Homo sapiens (Human) protein is ATP synthase F(0) complex subunit C3, mitochondrial.